Here is a 2240-residue protein sequence, read N- to C-terminus: Nonribisomal peptide synthetase notE (2240 aa).

The interval 22–52 (TETMRETLSSSSSPLSLSSITSPLSSASEPP) is disordered. Low complexity predominate over residues 28 to 52 (TLSSSSSPLSLSSITSPLSSASEPP). Positions 85–484 (QQRCREAPES…GRKEGQVKIR (400 aa)) are adenylation 1. Residues 616–692 (PPTTATEHAL…EQARKATPVS (77 aa)) enclose the Carrier 1 domain. The residue at position 653 (serine 653) is an O-(pantetheine 4'-phosphoryl)serine. The tract at residues 732 to 1144 (EDIFPCTPLQ…DFASPQDRDL (413 aa)) is condensation 1. Residues 1167 to 1564 (QEARQPSREA…GRRDTQLKLR (398 aa)) are adenylation 2. Residues 1700–1776 (PVSRGPELRL…ELARCTGEEP (77 aa)) enclose the Carrier 2 domain. Position 1737 is an O-(pantetheine 4'-phosphoryl)serine (serine 1737). Residues 1845 to 2159 (FSFHGEVSVE…ILQHQNIDMD (315 aa)) are condensation 2. Residues 2008–2027 (CTMPVKATPPTDSDDSRPSA) are disordered.

This sequence belongs to the NRP synthetase family.

It carries out the reaction L-proline + L-tryptophan + 2 ATP = brevianamide F + 2 AMP + 2 diphosphate + 2 H(+). The protein operates within alkaloid biosynthesis. Functionally, nonribisomal peptide synthetase; part of the gene cluster that mediates the biosynthesis of notoamide, a fungal indole alkaloid that belongs to a family of natural products containing a characteristic bicyclo[2.2.2]diazaoctane core. The first step of notoamide biosynthesis involves coupling of L-proline and L-tryptophan by the bimodular NRPS notE, to produce cyclo-L-tryptophan-L-proline called brevianamide F. The reverse prenyltransferase notF then acts as a deoxybrevianamide E synthase and converts brevianamide F to deoxybrevianamide E via reverse prenylation at C-2 of the indole ring leading to the bicyclo[2.2.2]diazaoctane core. Deoxybrevianamide E is further hydroxylated at C-6 of the indole ring, likely catalyzed by the cytochrome P450 monooxygenase notG, to yield 6-hydroxy-deoxybrevianamide E. 6-hydroxy-deoxybrevianamide E is a specific substrate of the prenyltransferase notC for normal prenylation at C-7 to produce 6-hydroxy-7-prenyl-deoxybrevianamide, also called notoamide S. As the proposed pivotal branching point in notoamide biosynthesis, notoamide S can be diverted to notoamide E through an oxidative pyran ring closure putatively catalyzed by either notH cytochrome P450 monooxygenase or the notD FAD-linked oxidoreductase. This step would be followed by an indole 2,3-epoxidation-initiated pinacol-like rearrangement catalyzed by the notB FAD-dependent monooxygenase leading to the formation of notoamide C and notoamide D. On the other hand notoamide S is converted to notoamide T by notH (or notD), a bifunctional oxidase that also functions as the intramolecular Diels-Alderase responsible for generation of (+)-notoamide T. To generate antipodal (-)-notoaminide T, notH' (or notD') in Aspergillus versicolor is expected to catalyze a Diels-Alder reaction leading to the opposite stereochemistry. The remaining oxidoreductase notD (or notH) likely catalyzes the oxidative pyran ring formation to yield (+)-stephacidin A. The FAD-dependent monooxygenase notI is highly similar to notB and is predicted to catalyze a similar conversion from (+)-stephacidin A to (-)-notoamide B via the 2,3-epoxidation of (+)-stephacidin A followed by a pinacol-type rearrangement. Finally, it remains unclear which enzyme could be responsible for the final hydroxylation steps leading to notoamide A and sclerotiamide. The polypeptide is Nonribisomal peptide synthetase notE (Aspergillus sp. (strain MF297-2)).